The sequence spans 688 residues: Complement C1s subcomponent (688 aa).

The signal sequence occupies residues 1–15; that stretch reads MWCFVFFSLLASFSA. The region spanning 16-130 is the CUB 1 domain; it reads EPTMYGEILS…TGFAAYYSAV (115 aa). Ca(2+)-binding residues include E60, D68, D113, D131, V132, and E134. C65 and C83 form a disulfide bridge. Positions 131–172 constitute an EGF-like; calcium-binding domain; that stretch reads DVNECTDFTDVPCSHFCNNFIGGYFCSCPPEYFLHDDMRTCG. 3 disulfide bridges follow: C135/C147, C143/C156, and C158/C171. Residues N149, F150, and G153 each contribute to the Ca(2+) site. The residue at position 149 (N149) is a (3R)-3-hydroxyasparagine. N174 carries an N-linked (GlcNAc...) asparagine glycan. A disulfide bond links C175 and C202. A CUB 2 domain is found at 175–290; the sequence is CSGDVFTALI…KGWKLRYHGD (116 aa). 5 residues coordinate Ca(2+): E226, D236, D275, G278, and Q279. C234 and C251 form a disulfide bridge. Sushi domains are found at residues 292-356 and 357-423; these read IPCP…ECQP and VDCG…KCIP. Cystine bridges form between C294-C341, C321-C354, C359-C403, C386-C421, C425-C549, C595-C618, and C627-C659. A glycan (N-linked (GlcNAc...) asparagine) is linked at N406. The 243-residue stretch at 438-680 folds into the Peptidase S1 domain; it reads IFGGYSTKIQ…YVDWILKTMQ (243 aa). Active-site charge relay system residues include H475 and D529. S631 acts as the Charge relay system in catalysis.

It belongs to the peptidase S1 family. Core component of the complement C1 complex, a calcium-dependent complex composed of 1 molecule of the C1Q subcomplex, 2 molecules of C1R and 2 molecules of C1S. The C1Q subcomplex is composed 18 subunits: 3 chains of C1QA, C1QB, and C1QC trimerize to form 6 collagen-like triple helices connected to six globular ligand-recognition modules. In terms of processing, cleaved and activated by C1R to generate Complement C1s subcomponent heavy and light chains. Post-translationally, the iron and 2-oxoglutarate dependent 3-hydroxylation of aspartate and asparagine is (R) stereospecific within EGF domains.

Its subcellular location is the secreted. The protein resides in the cell surface. It carries out the reaction Cleavage of Arg-|-Ala bond in complement component C4 to form C4a and C4b, and Lys(or Arg)-|-Lys bond in complement component C2 to form C2a and C2b: the 'classical' pathway C3 convertase.. With respect to regulation, cleaved and activated by C1R. Immunoglobulin-binding promotes autoactivation of C1R, which results in the cleavage of the Arg-Ile bond in the catalytic domain. Inhibited by C1 inhibitor (SERPING1). Component of the complement C1 complex, a multiprotein complex that initiates the classical pathway of the complement system, a cascade of proteins that leads to phagocytosis and breakdown of pathogens and signaling that strengthens the adaptive immune system. C1S is activated following association of the C1 complex with immunoglobulins (IgG or IgM) complexed with antigens to form antigen-antibody complexes on the surface of pathogens. C1S is cleaved and activated by C1R to generate C1s subcomponent heavy and light chains. C1s subcomponent light chain then cleaves and activates C2 and C4, the next components of the classical complement pathway. Its function is as follows. Serine protease component of the complement C1 complex, which catalyzes cleavage and activation of C2 and C4, the next components of the classical complement pathway. Also cleaves IGFBP5 and thereby inhibits the trophic effects of IGF1. The sequence is that of Complement C1s subcomponent from Rattus norvegicus (Rat).